The primary structure comprises 347 residues: NADH-quinone oxidoreductase subunit H (347 aa).

The next 8 membrane-spanning stretches (helical) occupy residues 13–33, 82–102, 115–135, 161–181, 198–218, 248–268, 286–306, and 325–345; these read LIIA…VAYL, GVFL…WAVI, VGIL…IMGG, IGFV…TDIV, FLDW…ISAL, FLLF…LMTV, VPGI…FAMV, and VFLP…KVFG.

The protein belongs to the complex I subunit 1 family. As to quaternary structure, NDH-1 is composed of 14 different subunits. Subunits NuoA, H, J, K, L, M, N constitute the membrane sector of the complex.

The protein resides in the cell inner membrane. It catalyses the reaction a quinone + NADH + 5 H(+)(in) = a quinol + NAD(+) + 4 H(+)(out). Its function is as follows. NDH-1 shuttles electrons from NADH, via FMN and iron-sulfur (Fe-S) centers, to quinones in the respiratory chain. The immediate electron acceptor for the enzyme in this species is believed to be ubiquinone. Couples the redox reaction to proton translocation (for every two electrons transferred, four hydrogen ions are translocated across the cytoplasmic membrane), and thus conserves the redox energy in a proton gradient. This subunit may bind ubiquinone. In Brucella melitensis biotype 1 (strain ATCC 23456 / CCUG 17765 / NCTC 10094 / 16M), this protein is NADH-quinone oxidoreductase subunit H.